We begin with the raw amino-acid sequence, 361 residues long: C3a anaphylatoxin chemotactic receptor (361 aa).

Residues 1–64 (MQQETQAPPL…FASSEVRVIS (64 aa)) lie on the Extracellular side of the membrane. N-linked (GlcNAc...) asparagine glycosylation is found at N36 and N50. Residues 65–85 (LVVYCLTFLLGVPGNSFVIFI) form a helical membrane-spanning segment. Topologically, residues 86-96 (AGMKMKRTVNT) are cytoplasmic. Residues 97–117 (IWFLNLATADLLCCLSVPLTV) traverse the membrane as a helical segment. Residues 118-134 (AEILLDHHWPYGYAMCK) lie on the Extracellular side of the membrane. C133 and C210 form a disulfide bridge. Residues 135-155 (ILPSVIVISMFASVFTLNIIS) traverse the membrane as a helical segment. At 156 to 177 (LDRFTQVITPVWAQNHRSLLLA) the chain is on the cytoplasmic side. Residues 178–198 (RLSCVAVWILALLLSLPFMIL) form a helical membrane-spanning segment. The Extracellular portion of the chain corresponds to 199–224 (RRTYEEFNMTVCTFDDDDFTTYGALS). Residues 225 to 245 (IVRFVFGFLIPLMSIVTCYGI) traverse the membrane as a helical segment. Residues 246–262 (IARKLGSRHFRSGRAFR) lie on the Cytoplasmic side of the membrane. Residues 263-283 (IMLAVIVAFFLCWMPYHVLDL) form a helical membrane-spanning segment. Residues 284 to 301 (IRSYGGESSSMVALKVDP) lie on the Extracellular side of the membrane. The helical transmembrane segment at 302–322 (LAISLAYVNSCLNPVLYVFMG) threads the bilayer. At 323–361 (QDFKNKVQLSLRRVFERAFSEEGTQISRSTQSQQVHSVL) the chain is on the cytoplasmic side.

Belongs to the G-protein coupled receptor 1 family.

It is found in the cell membrane. In terms of biological role, receptor for the chemotactic and inflammatory peptide anaphylatoxin C3a. This receptor stimulates chemotaxis, granule enzyme release and superoxide anion production. The chain is C3a anaphylatoxin chemotactic receptor (c3ar1) from Danio rerio (Zebrafish).